A 123-amino-acid polypeptide reads, in one-letter code: Immunoglobulin heavy variable 4-34 (123 aa).

Residues 1 to 26 (MDLLHKNMKHLWFFLLLVAAPRWVLS) form the signal peptide. Positions 26 to 123 (SQVQLQQWGA…ADTAVYYCAR (98 aa)) are v region. The interval 27-51 (QVQLQQWGAGLLKPSETLSLTCAVY) is framework-1. One can recognise an Ig-like domain in the interval 27–123 (QVQLQQWGAG…ADTAVYYCAR (97 aa)). An intrachain disulfide couples Cys-48 to Cys-121. Residues 52–59 (GGSFSGYY) are complementarity-determining-1. Residues 60 to 76 (WSWIRQPPGKGLEWIGE) are framework-2. The interval 77-83 (INHSGST) is complementarity-determining-2. N-linked (GlcNAc...) asparagine glycosylation occurs at Asn-78. A framework-3 region spans residues 84–121 (NYNPSLKSRVTISVDTSKNQFSLKLSSVTAADTAVYYC). Residues 122-123 (AR) form a complementarity-determining-3 region.

Immunoglobulins are composed of two identical heavy chains and two identical light chains; disulfide-linked.

The protein localises to the secreted. It localises to the cell membrane. In terms of biological role, v region of the variable domain of immunoglobulin heavy chains that participates in the antigen recognition. Immunoglobulins, also known as antibodies, are membrane-bound or secreted glycoproteins produced by B lymphocytes. In the recognition phase of humoral immunity, the membrane-bound immunoglobulins serve as receptors which, upon binding of a specific antigen, trigger the clonal expansion and differentiation of B lymphocytes into immunoglobulins-secreting plasma cells. Secreted immunoglobulins mediate the effector phase of humoral immunity, which results in the elimination of bound antigens. The antigen binding site is formed by the variable domain of one heavy chain, together with that of its associated light chain. Thus, each immunoglobulin has two antigen binding sites with remarkable affinity for a particular antigen. The variable domains are assembled by a process called V-(D)-J rearrangement and can then be subjected to somatic hypermutations which, after exposure to antigen and selection, allow affinity maturation for a particular antigen. This is Immunoglobulin heavy variable 4-34 from Homo sapiens (Human).